The chain runs to 196 residues: Alpha-crystallin A chain (196 aa).

Position 1 is an N-acetylmethionine (Met-1). The tract at residues 1–63 (MDVTIQHPWF…RTVLDSGISE (63 aa)) is required for complex formation with BFSP1 and BFSP2. Gln-6 is subject to Deamidated glutamine; partial. Ser-45 carries the post-translational modification Phosphoserine. Gln-50 bears the Deamidated glutamine; partial mark. The 110-residue stretch at 76–185 (HAGNPKNNPV…GHSERAIPVS (110 aa)) folds into the sHSP domain. 2 positions are modified to N6-acetyllysine: Lys-93 and Lys-122. His-123 serves as a coordination point for Zn(2+). Asn-124 bears the Deamidated asparagine; partial mark. Glu-125 and His-130 together coordinate Zn(2+). Ser-145 carries the phosphoserine modification. Asn-146 carries the post-translational modification Deamidated asparagine; partial. The disordered stretch occupies residues 168-196 (KVQSGLDAGHSERAIPVSREEKPSSAPSS). Deamidated glutamine; partial is present on Gln-170. Over residues 176–190 (GHSERAIPVSREEKP) the composition is skewed to basic and acidic residues. His-177 contributes to the Zn(2+) binding site. Ser-185 carries O-linked (GlcNAc) serine glycosylation.

Belongs to the small heat shock protein (HSP20) family. Heteropolymer composed of three CRYAA and one CRYAB subunits. Inter-subunit bridging via zinc ions enhances stability, which is crucial as there is no protein turn over in the lens. Can also form homodimers and homotetramers (dimers of dimers) which serve as the building blocks of homooligomers. Within homooligomers, the zinc-binding motif is created from residues of 3 different molecules. His-123 and Glu-125 from one molecule are ligands of the zinc ion, and His-130 and His-177 residues from additional molecules complete the site with tetrahedral coordination geometry. Part of a complex required for lens intermediate filament formation composed of BFSP1, BFSP2 and CRYAA. Acetylation at Lys-93 may increase chaperone activity. In terms of processing, undergoes age-dependent proteolytical cleavage at the C-terminus.

The protein resides in the cytoplasm. Its subcellular location is the nucleus. In terms of biological role, contributes to the transparency and refractive index of the lens. Acts as a chaperone, preventing aggregation of various proteins under a wide range of stress conditions. Required for the correct formation of lens intermediate filaments as part of a complex composed of BFSP1, BFSP2 and CRYAA. In Mus musculus (Mouse), this protein is Alpha-crystallin A chain (Cryaa).